A 153-amino-acid chain; its full sequence is uncharacterized protein (153 aa).

The first 18 residues, Met-1–Ala-18, serve as a signal peptide directing secretion. Residues Asn-19 and Asn-25 are each glycosylated (N-linked (GlcNAc...) asparagine). Topologically, residues Asn-19–Thr-43 are extracellular. A helical membrane pass occupies residues Leu-44–Phe-64. The Cytoplasmic portion of the chain corresponds to His-65 to Ser-153. Residues Lys-75 to Gln-115 form a disordered region. The segment covering Glu-77–His-96 has biased composition (basic and acidic residues).

The protein localises to the membrane. This is an uncharacterized protein from Xenopus tropicalis (Western clawed frog).